Reading from the N-terminus, the 186-residue chain is Elongation factor P (186 aa).

It belongs to the elongation factor P family.

Its subcellular location is the cytoplasm. Its pathway is protein biosynthesis; polypeptide chain elongation. Functionally, involved in peptide bond synthesis. Stimulates efficient translation and peptide-bond synthesis on native or reconstituted 70S ribosomes in vitro. Probably functions indirectly by altering the affinity of the ribosome for aminoacyl-tRNA, thus increasing their reactivity as acceptors for peptidyl transferase. The protein is Elongation factor P of Elusimicrobium minutum (strain Pei191).